The primary structure comprises 174 residues: Co-chaperone protein HscB homolog (174 aa).

A J domain is found at 2–74 (NYFDLFNVVP…LRRAEHMLSL (73 aa)).

The protein belongs to the HscB family. As to quaternary structure, interacts with HscA and stimulates its ATPase activity.

Its function is as follows. Co-chaperone involved in the maturation of iron-sulfur cluster-containing proteins. Seems to help targeting proteins to be folded toward HscA. The polypeptide is Co-chaperone protein HscB homolog (Shewanella frigidimarina (strain NCIMB 400)).